A 1010-amino-acid polypeptide reads, in one-letter code: Protein translocase subunit SecA (1010 aa).

Residues glutamine 86, 104 to 108, and aspartate 535 contribute to the ATP site; that span reads GEGKT. Over residues 893-904 the composition is skewed to low complexity; it reads QAGAADGNAKGA. The tract at residues 893-916 is disordered; it reads QAGAADGNAKGARTVRHSVRLPGR. Zn(2+) is bound by residues cysteine 920, cysteine 922, cysteine 931, and histidine 932. The span at 950-981 shows a compositional bias: low complexity; the sequence is QHAAVAADTPAQPAPQATATRPPTSQVPRGRA. The interval 950–1010 is disordered; the sequence is QHAAVAADTP…RGKGASARKK (61 aa).

This sequence belongs to the SecA family. As to quaternary structure, monomer and homodimer. Part of the essential Sec protein translocation apparatus which comprises SecA, SecYEG and auxiliary proteins SecDF. Other proteins may also be involved. Zn(2+) is required as a cofactor.

Its subcellular location is the cell membrane. It localises to the cytoplasm. The catalysed reaction is ATP + H2O + cellular proteinSide 1 = ADP + phosphate + cellular proteinSide 2.. Its function is as follows. Part of the Sec protein translocase complex. Interacts with the SecYEG preprotein conducting channel. Has a central role in coupling the hydrolysis of ATP to the transfer of proteins into and across the cell membrane, serving as an ATP-driven molecular motor driving the stepwise translocation of polypeptide chains across the membrane. The chain is Protein translocase subunit SecA from Roseiflexus sp. (strain RS-1).